A 91-amino-acid chain; its full sequence is uncharacterized protein (91 aa).

An N-terminal signal peptide occupies residues 1–25; it reads MLLQRIGIEHLRIWILLLLISLVPA.

This is an uncharacterized protein from Caenorhabditis elegans.